The following is a 181-amino-acid chain: Dual-action ribosomal maturation protein DarP (181 aa).

The segment at 1 to 23 (MTGIKKPMSQYQDDNELEDWGPS) is disordered.

This sequence belongs to the DarP family.

It is found in the cytoplasm. In terms of biological role, member of a network of 50S ribosomal subunit biogenesis factors which assembles along the 30S-50S interface, preventing incorrect 23S rRNA structures from forming. Promotes peptidyl transferase center (PTC) maturation. This is Dual-action ribosomal maturation protein DarP from Aeromonas salmonicida (strain A449).